A 454-amino-acid chain; its full sequence is MCAARRRELALIFRGTFVHSTWTCPMEVLRDHLLGVSDSGKIVFLEESSQQEKLAKEWCFKPCEIRELSHHEFFMPGLVDTHIHAPQYAFAGSNVDLPLLDWLNKYTFPTEKRFQSTDVAEEVYTRVVRRTLKNGTTTACYFGTIHTDSSLILAEITDKFGQRAFVGKVCMDLNNTVPEYKETTEESVKETERFVSEMLQKNYSRVKPIVTPRFSLSCTETLMSELGNIAKTHDLYIQSHISENREEIEAVKSLYPGYKNYTDVYDKNNLLTNKTVMAHGCYLSEEELNVFSERGASIAHCPNSNLSLSSGLLNVLDVLKHKVKIGLGTDVAGGYSYSMLDAIRRAVMVSNVLLINKVNEKSLTLKEVFRLATLGGSQALGLDREIGNFEVGKDFDALLINPRASDSPIDLFCGDFVGDISEAVIQKFLYLGDDRNIEEVYVGGKQVVPFSSSV.

His82 and His84 together coordinate Zn(2+). Substrate contacts are provided by residues 84–87, 213–214, 240–243, and Asp330; these read HAPQ, RF, and HISE. Residues His240 and Asp330 each coordinate Zn(2+). Ser453 carries the post-translational modification Phosphoserine.

This sequence belongs to the metallo-dependent hydrolases superfamily. ATZ/TRZ family. Homodimer. It depends on Zn(2+) as a cofactor.

It catalyses the reaction guanine + H2O + H(+) = xanthine + NH4(+). It participates in purine metabolism; guanine degradation; xanthine from guanine: step 1/1. Its function is as follows. Catalyzes the hydrolytic deamination of guanine, producing xanthine and ammonia. In Rattus norvegicus (Rat), this protein is Guanine deaminase (Gda).